The primary structure comprises 171 residues: Large ribosomal subunit protein uL24 (171 aa).

The interval 1-124 is large ribosomal subunit protein uL24; the sequence is MNIKTGDTVV…AKPAKTKAEK (124 aa). The tract at residues 108–171 is disordered; sequence GQTLDKAAKP…SVQKKGASGK (64 aa). Residues 125–171 are unknown; it reads VEKAATSSTDKPAKVTKAAKEAKPVKAVKSQKVEKNTSVQKKGASGK.

The protein belongs to the universal ribosomal protein uL24 family. In terms of assembly, part of the 50S ribosomal subunit.

In terms of biological role, one of two assembly initiator proteins, it binds directly to the 5'-end of the 23S rRNA, where it nucleates assembly of the 50S subunit. Functionally, one of the proteins that surrounds the polypeptide exit tunnel on the outside of the subunit. This is Large ribosomal subunit protein uL24 from Acholeplasma laidlawii (strain PG-8A).